The following is a 425-amino-acid chain: bZIP transcription factor RISBZ2 (425 aa).

2 disordered regions span residues Met-1–Gly-50 and Asn-169–Leu-257. The segment covering Gln-30 to Gly-50 has biased composition (gly residues). Over residues Ile-171 to Leu-182 the composition is skewed to polar residues. Residues Ser-213–Ala-222 are compositionally biased toward acidic residues. A compositionally biased stretch (basic and acidic residues) spans Ala-231–Arg-247. Residues Asp-232 to Leu-295 enclose the bZIP domain. The segment at Arg-234–Lys-253 is basic motif. The segment at Leu-260–Leu-274 is leucine-zipper. Residues Met-334–Asp-354 are disordered.

As to quaternary structure, heterodimer with RISBZ1/BZIP58.

The protein resides in the nucleus. Its function is as follows. Transcriptional activator that binds to the DNA specific sequence 5'-GCCACGT[AC]AG-3' found in the alpha-globulin gene promoter. Does not bind to promoters of other major storage genes such as glutelin, prolamin and albumin. Binds to the DNA specific sequence 5'-TGAGTCA-3' found in seed storage protein gene promoters. This chain is bZIP transcription factor RISBZ2, found in Oryza sativa subsp. japonica (Rice).